The primary structure comprises 342 residues: MSINVEQAIIHSISQDGEGQLSCRLRPQPLLNSQAVEAMLEELHQTYTTKAGKGFGHFGINGEDGEANTKFEEALTTYRSGELGFVEFSGIAGKLLQEELAKYDFSTGGFLLLSCYTYMTSDYLFVSLLNAKSSMTVLDDMELSQNTHLDLNNVQLAARIDLTEWQADPESKKYISFIRGRAGRKVADFFLDFMGCVEGVNTKAQNKSLMNAVEDFVGNSELTKDERQQARERVFDYCTERCDEGASIQIKDLADELADQGMDSFYDFAQGGNYELEEEFPGDKPTLRQLKKFSGTGGGVTLSFDGQHLGERVIYDPVSDTIIIKGVPANLKDQLDRRLKGE.

It belongs to the YejK family.

The protein localises to the cytoplasm. Its subcellular location is the nucleoid. The polypeptide is Nucleoid-associated protein Spea_1765 (Shewanella pealeana (strain ATCC 700345 / ANG-SQ1)).